Here is an 884-residue protein sequence, read N- to C-terminus: Alanine--tRNA ligase (884 aa).

Zn(2+)-binding residues include histidine 572, histidine 576, cysteine 673, and histidine 677.

This sequence belongs to the class-II aminoacyl-tRNA synthetase family. Zn(2+) is required as a cofactor.

The protein resides in the cytoplasm. The catalysed reaction is tRNA(Ala) + L-alanine + ATP = L-alanyl-tRNA(Ala) + AMP + diphosphate. Its function is as follows. Catalyzes the attachment of alanine to tRNA(Ala) in a two-step reaction: alanine is first activated by ATP to form Ala-AMP and then transferred to the acceptor end of tRNA(Ala). Also edits incorrectly charged Ser-tRNA(Ala) and Gly-tRNA(Ala) via its editing domain. The polypeptide is Alanine--tRNA ligase (Xylella fastidiosa (strain 9a5c)).